A 401-amino-acid polypeptide reads, in one-letter code: Dual-specificity RNA methyltransferase RlmN (401 aa).

Glu-114 serves as the catalytic Proton acceptor. Residues 120 to 365 form the Radical SAM core domain; sequence DKGRGTLCVS…TIVRRTRGDD (246 aa). Cysteines 127 and 370 form a disulfide. [4Fe-4S] cluster-binding residues include Cys-134, Cys-138, and Cys-141. Residues 187–188, Ser-219, 241–243, and Asn-327 each bind S-adenosyl-L-methionine; these read GE and SLH. Cys-370 functions as the S-methylcysteine intermediate in the catalytic mechanism.

It belongs to the radical SAM superfamily. RlmN family. [4Fe-4S] cluster serves as cofactor.

Its subcellular location is the cytoplasm. It catalyses the reaction adenosine(2503) in 23S rRNA + 2 reduced [2Fe-2S]-[ferredoxin] + 2 S-adenosyl-L-methionine = 2-methyladenosine(2503) in 23S rRNA + 5'-deoxyadenosine + L-methionine + 2 oxidized [2Fe-2S]-[ferredoxin] + S-adenosyl-L-homocysteine. The enzyme catalyses adenosine(37) in tRNA + 2 reduced [2Fe-2S]-[ferredoxin] + 2 S-adenosyl-L-methionine = 2-methyladenosine(37) in tRNA + 5'-deoxyadenosine + L-methionine + 2 oxidized [2Fe-2S]-[ferredoxin] + S-adenosyl-L-homocysteine. Its function is as follows. Specifically methylates position 2 of adenine 2503 in 23S rRNA and position 2 of adenine 37 in tRNAs. m2A2503 modification seems to play a crucial role in the proofreading step occurring at the peptidyl transferase center and thus would serve to optimize ribosomal fidelity. The sequence is that of Dual-specificity RNA methyltransferase RlmN from Xanthomonas oryzae pv. oryzae (strain MAFF 311018).